A 224-amino-acid polypeptide reads, in one-letter code: tRNA (guanine-N(7)-)-methyltransferase (224 aa).

The S-adenosyl-L-methionine site is built by Glu54, Glu79, Glu106, and Asp129. The active site involves Asp129. Residues Lys133 and Asp165 each coordinate substrate.

Belongs to the class I-like SAM-binding methyltransferase superfamily. TrmB family.

The catalysed reaction is guanosine(46) in tRNA + S-adenosyl-L-methionine = N(7)-methylguanosine(46) in tRNA + S-adenosyl-L-homocysteine. It participates in tRNA modification; N(7)-methylguanine-tRNA biosynthesis. In terms of biological role, catalyzes the formation of N(7)-methylguanine at position 46 (m7G46) in tRNA. This chain is tRNA (guanine-N(7)-)-methyltransferase, found in Chlamydia abortus (strain DSM 27085 / S26/3) (Chlamydophila abortus).